A 214-amino-acid polypeptide reads, in one-letter code: Octanoyltransferase (214 aa).

Residues 32 to 207 (EDTLDEIWLV…NLLALLNHPP (176 aa)) enclose the BPL/LPL catalytic domain. Substrate-binding positions include 71 to 78 (RGGQVTYH), 138 to 140 (SLG), and 151 to 153 (GLA). Cys169 acts as the Acyl-thioester intermediate in catalysis.

The protein belongs to the LipB family.

Its subcellular location is the cytoplasm. It catalyses the reaction octanoyl-[ACP] + L-lysyl-[protein] = N(6)-octanoyl-L-lysyl-[protein] + holo-[ACP] + H(+). It functions in the pathway protein modification; protein lipoylation via endogenous pathway; protein N(6)-(lipoyl)lysine from octanoyl-[acyl-carrier-protein]: step 1/2. Functionally, catalyzes the transfer of endogenously produced octanoic acid from octanoyl-acyl-carrier-protein onto the lipoyl domains of lipoate-dependent enzymes. Lipoyl-ACP can also act as a substrate although octanoyl-ACP is likely to be the physiological substrate. This is Octanoyltransferase from Klebsiella pneumoniae (strain 342).